Here is a 238-residue protein sequence, read N- to C-terminus: Serine protease SplE (238 aa).

The first 36 residues, 1–36 (MNKNIIIKSIAALTILTSVTGVGTTMVEGIQQTAKA), serve as a signal peptide directing secretion. Residues histidine 75, aspartate 113, and serine 191 each act as charge relay system in the active site.

The protein belongs to the peptidase S1B family.

It is found in the secreted. The polypeptide is Serine protease SplE (splE) (Staphylococcus aureus).